The following is a 164-amino-acid chain: Endoribonuclease YbeY (164 aa).

3 residues coordinate Zn(2+): His117, His121, and His127.

This sequence belongs to the endoribonuclease YbeY family. Zn(2+) serves as cofactor.

The protein localises to the cytoplasm. Functionally, single strand-specific metallo-endoribonuclease involved in late-stage 70S ribosome quality control and in maturation of the 3' terminus of the 16S rRNA. The sequence is that of Endoribonuclease YbeY from Mycoplasma mycoides subsp. mycoides SC (strain CCUG 32753 / NCTC 10114 / PG1).